Here is a 768-residue protein sequence, read N- to C-terminus: Post-transcriptional regulator MKT1 (768 aa).

This sequence belongs to the XPG/RAD2 endonuclease family. As to quaternary structure, interacts with PBP1.

It localises to the cytoplasm. Its subcellular location is the cytosol. Functionally, involved in 3'-UTR mediated RNA regulation. Complexes with PBP1 to promote mRNA interactions with poly(A)-binding protein. The chain is Post-transcriptional regulator MKT1 from Cryptococcus neoformans var. grubii serotype A (strain H99 / ATCC 208821 / CBS 10515 / FGSC 9487) (Filobasidiella neoformans var. grubii).